A 79-amino-acid polypeptide reads, in one-letter code: Sulfur carrier protein TusA (79 aa).

Cys17 functions as the Cysteine persulfide intermediate in the catalytic mechanism.

Belongs to the sulfur carrier protein TusA family.

Its subcellular location is the cytoplasm. In terms of biological role, sulfur carrier protein which probably makes part of a sulfur-relay system. The sequence is that of Sulfur carrier protein TusA from Actinobacillus succinogenes (strain ATCC 55618 / DSM 22257 / CCUG 43843 / 130Z).